Here is a 206-residue protein sequence, read N- to C-terminus: Putative 3-methyladenine DNA glycosylase (206 aa).

The protein belongs to the DNA glycosylase MPG family.

The polypeptide is Putative 3-methyladenine DNA glycosylase (Staphylococcus carnosus (strain TM300)).